We begin with the raw amino-acid sequence, 61 residues long: Potassium channel toxin alpha-KTx 6.8 (61 aa).

An N-terminal signal peptide occupies residues 1–23; it reads MNAKFILLLLVVTTTILLPDTQG. 4 disulfide bridges follow: cysteine 29–cysteine 50, cysteine 35–cysteine 55, cysteine 39–cysteine 57, and cysteine 45–cysteine 60. A Cysteine amide modification is found at cysteine 60.

The protein belongs to the short scorpion toxin superfamily. Potassium channel inhibitor family. Alpha-KTx 06 subfamily. As to expression, expressed by the venom gland.

The protein resides in the secreted. Blocker of voltage-gated potassium channels. In Opistophthalmus carinatus (African yellow leg scorpion), this protein is Potassium channel toxin alpha-KTx 6.8.